The following is a 345-amino-acid chain: S-adenosylmethionine:tRNA ribosyltransferase-isomerase (345 aa).

This sequence belongs to the QueA family. As to quaternary structure, monomer.

It localises to the cytoplasm. It carries out the reaction 7-aminomethyl-7-carbaguanosine(34) in tRNA + S-adenosyl-L-methionine = epoxyqueuosine(34) in tRNA + adenine + L-methionine + 2 H(+). The protein operates within tRNA modification; tRNA-queuosine biosynthesis. Functionally, transfers and isomerizes the ribose moiety from AdoMet to the 7-aminomethyl group of 7-deazaguanine (preQ1-tRNA) to give epoxyqueuosine (oQ-tRNA). The sequence is that of S-adenosylmethionine:tRNA ribosyltransferase-isomerase from Shewanella sp. (strain MR-4).